Consider the following 631-residue polypeptide: tRNA uridine 5-carboxymethylaminomethyl modification enzyme MnmG (631 aa).

An FAD-binding site is contributed by Gly-15–Gly-20. Residues Thr-203 to Thr-232 form a disordered region. Residues Lys-216 to Thr-232 are compositionally biased toward basic and acidic residues. Gly-276 to Phe-290 lines the NAD(+) pocket.

This sequence belongs to the MnmG family. As to quaternary structure, homodimer. Heterotetramer of two MnmE and two MnmG subunits. FAD serves as cofactor.

Its subcellular location is the cytoplasm. Functionally, NAD-binding protein involved in the addition of a carboxymethylaminomethyl (cmnm) group at the wobble position (U34) of certain tRNAs, forming tRNA-cmnm(5)s(2)U34. The sequence is that of tRNA uridine 5-carboxymethylaminomethyl modification enzyme MnmG from Lactobacillus gasseri (strain ATCC 33323 / DSM 20243 / BCRC 14619 / CIP 102991 / JCM 1131 / KCTC 3163 / NCIMB 11718 / NCTC 13722 / AM63).